The primary structure comprises 697 residues: Choline transporter-like protein 2 (697 aa).

Residues 1 to 30 (MDMEEKPKYGEPRKFDPSFKGPIQNRGCTD) are Cytoplasmic-facing. The helical transmembrane segment at 31–51 (IVCCIIFIIAILGYLAVGILA) threads the bilayer. At 52–226 (WTHGDPRKVI…KIFEDYTKSW (175 aa)) the chain is on the extracellular side. 2 N-linked (GlcNAc...) asparagine glycosylation sites follow: asparagine 113 and asparagine 204. A helical transmembrane segment spans residues 227 to 247 (YWILICLLIAVVLSLIFIVLL). Over 248–249 (RF) the chain is Cytoplasmic. The helical transmembrane segment at 250 to 270 (LAGVMVWVMILMVVAVIAYGI) threads the bilayer. Topologically, residues 271-309 (AHCSIKYVSLKDTPGSNITLQQLGFQPDFAVYLHIRQTW) are extracellular. N-linked (GlcNAc...) asparagine glycosylation is present at asparagine 287. A helical membrane pass occupies residues 310–330 (LAFIIILAILELIIILLLIFL). The Cytoplasmic segment spans residues 331–353 (RNRIRVAVELMKEASRAIGYVMS). The helical transmembrane segment at 354-374 (SLVFPIFTFFLLAIVIAFWGV) threads the bilayer. Over 375-435 (NAVFLSTSSE…YGGETPYHKY (61 aa)) the chain is Extracellular. Asparagine 391 and asparagine 406 each carry an N-linked (GlcNAc...) asparagine glycan. The chain crosses the membrane as a helical span at residues 436–456 (LILLQFYNVFLFFWCANFVTA). The Cytoplasmic portion of the chain corresponds to 457–498 (LGQMTLAGAFASYYWAFDKSKDMPAFPLCASLGRSLRYHTGS). Residues 499 to 519 (LAFGSLLLAIVQVIRVLLEYI) form a helical membrane-spanning segment. Residues 520 to 593 (DHKLKGAENK…RVVVLDKVTD (74 aa)) lie on the Extracellular side of the membrane. The helical transmembrane segment at 594–614 (FILFLGKLLIVGLVGIFAFFF) threads the bilayer. Topologically, residues 615–632 (FSGQTDAFKGTAPSLHYY) are cytoplasmic. A helical membrane pass occupies residues 633–653 (WVPILTVLVCSYLIAHGFFSV). Topologically, residues 654–697 (YAMCVDTLFLCFLEDLERNDGSAERPYLMSENLLNVLKKKNQAN) are extracellular.

Belongs to the CTL (choline transporter-like) family.

Its subcellular location is the cell membrane. The protein localises to the mitochondrion outer membrane. The catalysed reaction is choline(out) + n H(+)(in) = choline(in) + n H(+)(out). It carries out the reaction ethanolamine(out) + n H(+)(in) = ethanolamine(in) + n H(+)(out). In terms of biological role, choline/H+ antiporter, mainly in mitochodria. Also acts as a low-affinity ethanolamine/H+ antiporter, regulating the supply of extracellular ethanolamine (Etn) for the CDP-Etn pathway, redistribute intracellular Etn and balance the CDP-Cho and CDP-Etn arms of the Kennedy pathway. The polypeptide is Choline transporter-like protein 2 (slc44a2) (Danio rerio (Zebrafish)).